Consider the following 470-residue polypeptide: Diaminobutyrate--2-oxoglutarate aminotransferase (470 aa).

Lysine 304 bears the N6-(pyridoxal phosphate)lysine mark.

The protein belongs to the class-III pyridoxal-phosphate-dependent aminotransferase family. Pyridoxal 5'-phosphate serves as cofactor.

It carries out the reaction L-2,4-diaminobutanoate + 2-oxoglutarate = L-aspartate 4-semialdehyde + L-glutamate. Its pathway is siderophore biosynthesis; rhizobactin biosynthesis. The sequence is that of Diaminobutyrate--2-oxoglutarate aminotransferase (rhbA) from Rhizobium meliloti (strain 1021) (Ensifer meliloti).